The chain runs to 404 residues: MAERFDRIWHNARLATMRADRPDLGEIEHGLIAARGGHIVYAGAAADFPADADAIKRIDCAGRWITPGLVDCHTHLVYGGNRAHEFELRLKGASYEEIARAGGGIVSTVAATRKASEAELVASALPRLDALIGEGATTVEIKSGYGLDAETEMRQLAAARSLGRQRPVAIRTSFLGAHALPPEADGDKDRYIDLVCKEMLPAVAKAGLADAVDTFMEGIAFSAGQTARVFETARGLGLPVKLHADQLSNLGGAALAAKFSALSADHLEHTDEAGAAAMAKAGTVAVLLPGAFYFIRETQKPPVESFRKHGVHMALASDCNPGSSPLTSLLLAMNMGATLFRMTVAECLAGVTREGAHALGVLDETGTLEAGKWCDLAIWDIERPAELVYRIGFNPLHRRVWRGQ.

Fe(3+) contacts are provided by His-73 and His-75. Zn(2+)-binding residues include His-73 and His-75. 4-imidazolone-5-propanoate-binding residues include Arg-82, Tyr-145, and His-178. Tyr-145 contributes to the N-formimidoyl-L-glutamate binding site. His-243 serves as a coordination point for Fe(3+). Zn(2+) is bound at residue His-243. Position 246 (Gln-246) interacts with 4-imidazolone-5-propanoate. Residue Asp-318 coordinates Fe(3+). Asp-318 is a Zn(2+) binding site. N-formimidoyl-L-glutamate is bound by residues Asn-320 and Gly-322. Ser-323 contacts 4-imidazolone-5-propanoate.

The protein belongs to the metallo-dependent hydrolases superfamily. HutI family. Requires Zn(2+) as cofactor. Fe(3+) is required as a cofactor.

The protein localises to the cytoplasm. It catalyses the reaction 4-imidazolone-5-propanoate + H2O = N-formimidoyl-L-glutamate. It functions in the pathway amino-acid degradation; L-histidine degradation into L-glutamate; N-formimidoyl-L-glutamate from L-histidine: step 3/3. Functionally, catalyzes the hydrolytic cleavage of the carbon-nitrogen bond in imidazolone-5-propanoate to yield N-formimidoyl-L-glutamate. It is the third step in the universal histidine degradation pathway. This chain is Imidazolonepropionase, found in Bradyrhizobium diazoefficiens (strain JCM 10833 / BCRC 13528 / IAM 13628 / NBRC 14792 / USDA 110).